The following is a 273-amino-acid chain: Dermonecrotic toxin LdSicTox-alphaIB1aiv (273 aa).

H5 is a catalytic residue. Residues E25 and D27 each contribute to the Mg(2+) site. H41 (nucleophile) is an active-site residue. 2 disulfide bridges follow: C45-C51 and C47-C190. D85 serves as a coordination point for Mg(2+). An N-linked (GlcNAc...) asparagine glycan is attached at N250.

The protein belongs to the arthropod phospholipase D family. Class II subfamily. Mg(2+) serves as cofactor. In terms of tissue distribution, expressed by the venom gland.

Its subcellular location is the secreted. The enzyme catalyses an N-(acyl)-sphingosylphosphocholine = an N-(acyl)-sphingosyl-1,3-cyclic phosphate + choline. The catalysed reaction is an N-(acyl)-sphingosylphosphoethanolamine = an N-(acyl)-sphingosyl-1,3-cyclic phosphate + ethanolamine. It carries out the reaction a 1-acyl-sn-glycero-3-phosphocholine = a 1-acyl-sn-glycero-2,3-cyclic phosphate + choline. It catalyses the reaction a 1-acyl-sn-glycero-3-phosphoethanolamine = a 1-acyl-sn-glycero-2,3-cyclic phosphate + ethanolamine. Functionally, dermonecrotic toxins cleave the phosphodiester linkage between the phosphate and headgroup of certain phospholipids (sphingolipid and lysolipid substrates), forming an alcohol (often choline) and a cyclic phosphate. This toxin acts on sphingomyelin (SM). It may also act on ceramide phosphoethanolamine (CPE), lysophosphatidylcholine (LPC) and lysophosphatidylethanolamine (LPE), but not on lysophosphatidylserine (LPS), and lysophosphatidylglycerol (LPG). It acts by transphosphatidylation, releasing exclusively cyclic phosphate products as second products. Induces dermonecrosis, hemolysis, increased vascular permeability, edema, inflammatory response, and platelet aggregation. The protein is Dermonecrotic toxin LdSicTox-alphaIB1aiv of Loxosceles deserta (Desert recluse spider).